We begin with the raw amino-acid sequence, 113 residues long: uncharacterized protein (113 aa).

Belongs to the HesB/IscA family.

This is an uncharacterized protein from Synechocystis sp. (strain ATCC 27184 / PCC 6803 / Kazusa).